Here is a 788-residue protein sequence, read N- to C-terminus: MTIHQFLLLFLFWVCLPHFCSPEIMFRRTPVPQQRILSSRVPRSDGKILHRQKRGWMWNQFFLLEEYTGSDYQYVGKLHSDQDKGDGSLKYILSGDGAGTLFIIDEKTGDIHATRRIDREEKAFYTLRAQAINRRTLRPVEPESEFVIKIHDINDNEPTFPEEIYTASVPEMSVVGTSVVQVTATDADDPSYGNSARVIYSILQGQPYFSVEPETGIIRTALPNMNRENREQYQVVIQAKDMGGQMGGLSGTTTVNITLTDVNDNPPRFPQNTIHLRVLESSPVGTAIGSVKATDADTGKNAEVEYRIIDGDGTDMFDIVTEKDTQEGIITVKKPLDYESRRLYTLKVEAENTHVDPRFYYLGPFKDTTIVKISIEDVDEPPVFSRSSYLFEVHEDIEVGTIIGTVMARDPDSISSPIRFSLDRHTDLDRIFNIHSGNGSLYTSKPLDRELSQWHNLTVIAAEINNPKETTRVAVFVRILDVNDNAPQFAVFYDTFVCENARPGQLIQTISAVDKDDPLGGQKFFFSLAAVNPNFTVQDNEDNTARILTRKNGFNRHEISTYLLPVVISDNDYPIQSSTGTLTIRVCACDSQGNMQSCSAEALLLPAGLSTGALIAILLCIIILLVIVVLFAALKRQRKKEPLILSKEDIRDNIVSYNDEGGGEEDTQAFDIGTLRNPAAIEEKKLRRDIIPETLFIPRRTPTAPDNTDVRDFINERLKEHDLDPTAPPYDSLATYAYEGNDSIAESLSSLESGTTEGDQNYDYLREWGPRFNKLAEMYGGGESDKDS.

The signal sequence occupies residues 1–22 (MTIHQFLLLFLFWVCLPHFCSP). Residues 23–54 (EIMFRRTPVPQQRILSSRVPRSDGKILHRQKR) constitute a propeptide that is removed on maturation. 5 Cadherin domains span residues 55 to 160 (GWMW…EPTF), 161 to 269 (PEEI…PPRF), 270 to 384 (PQNT…PPVF), 385 to 487 (SRSS…DNAP), and 488 to 606 (QFAV…LLLP). Residues 55–613 (GWMWNQFFLL…LLPAGLSTGA (559 aa)) are Extracellular-facing. Residue Asn-256 is glycosylated (N-linked (GlcNAc...) asparagine). 3 N-linked (GlcNAc...) asparagine glycosylation sites follow: Asn-438, Asn-456, and Asn-534. A helical transmembrane segment spans residues 614-634 (LIAILLCIIILLVIVVLFAAL). Residues 635–788 (KRQRKKEPLI…YGGGESDKDS (154 aa)) are Cytoplasmic-facing. 2 positions are modified to phosphoserine: Ser-784 and Ser-788.

In terms of tissue distribution, predominantly expressed in brain. Also found in adult and fetal kidney. Very low levels detected in prostate and fetal lung.

It localises to the cell membrane. Functionally, cadherins are calcium-dependent cell adhesion proteins. They preferentially interact with themselves in a homophilic manner in connecting cells; cadherins may thus contribute to the sorting of heterogeneous cell types. In Homo sapiens (Human), this protein is Cadherin-10 (CDH10).